The primary structure comprises 475 residues: 23S rRNA (uracil(1939)-C(5))-methyltransferase RlmD (475 aa).

The 76-residue stretch at 1-76 folds into the TRAM domain; that stretch reads MHRGDKPVNI…SRFSKAKVRE (76 aa). Residues cysteine 89, cysteine 95, cysteine 98, and cysteine 178 each coordinate [4Fe-4S] cluster. S-adenosyl-L-methionine contacts are provided by glutamine 299, phenylalanine 328, asparagine 333, glutamate 349, aspartate 377, and aspartate 398. Catalysis depends on cysteine 431, which acts as the Nucleophile.

It belongs to the class I-like SAM-binding methyltransferase superfamily. RNA M5U methyltransferase family. RlmD subfamily.

The catalysed reaction is uridine(1939) in 23S rRNA + S-adenosyl-L-methionine = 5-methyluridine(1939) in 23S rRNA + S-adenosyl-L-homocysteine + H(+). Catalyzes the formation of 5-methyl-uridine at position 1939 (m5U1939) in 23S rRNA. This Polynucleobacter necessarius subsp. necessarius (strain STIR1) protein is 23S rRNA (uracil(1939)-C(5))-methyltransferase RlmD.